The sequence spans 586 residues: Assimilatory ferredoxin-dependent nitrite reductase (586 aa).

Residues Cys411, Cys417, Cys455, and Cys459 each coordinate [4Fe-4S] cluster. Cys459 serves as a coordination point for siroheme. The tract at residues 566-586 (SWYPFADEDEPPKTEQPMTSD) is disordered.

The protein belongs to the nitrite and sulfite reductase 4Fe-4S domain family. In terms of assembly, monomer. It depends on siroheme as a cofactor. [4Fe-4S] cluster is required as a cofactor.

It carries out the reaction 6 oxidized [2Fe-2S]-[ferredoxin] + NH4(+) + 2 H2O = nitrite + 6 reduced [2Fe-2S]-[ferredoxin] + 8 H(+). The protein operates within nitrogen metabolism; nitrate reduction (assimilation). With respect to regulation, inhibited by cyanide and azide. Functionally, catalyzes the reduction of nitrite to ammonium in the nitrate assimilation pathway, using ferredoxin as the electron donor. Can use reduced methyl viologen but neither NADPH nor NADH as electron donors. This Haloferax mediterranei (strain ATCC 33500 / DSM 1411 / JCM 8866 / NBRC 14739 / NCIMB 2177 / R-4) (Halobacterium mediterranei) protein is Assimilatory ferredoxin-dependent nitrite reductase.